The chain runs to 239 residues: uncharacterized protein (239 aa).

It is found in the endoplasmic reticulum. It localises to the golgi apparatus. This is an uncharacterized protein from Schizosaccharomyces pombe (strain 972 / ATCC 24843) (Fission yeast).